A 318-amino-acid polypeptide reads, in one-letter code: NADH-ubiquinone oxidoreductase chain 1 (318 aa).

9 consecutive transmembrane segments (helical) span residues 2-22 (FLMNILCLVIPILLAMAFLTL), 37-57 (PNIVGPYGLLQPIADAIKLFI), 69-89 (LMFTLAPTLAFTLALSLWIPM), 100-120 (LGVLFILALSSLAVYSILWSG), 136-156 (VAQTISYEVTLAIILLSVMMM), 171-191 (HMWLILPLWPLAMMWFISTLA), 231-251 (IIMMNALTATLFLGAFHNPLF), 253-273 (ELFTVNFITKTLILTAIFLWV), and 293-313 (FLPLTLALCMLHVSIPALSAG).

The protein belongs to the complex I subunit 1 family. As to quaternary structure, core subunit of respiratory chain NADH dehydrogenase (Complex I) which is composed of 45 different subunits.

The protein resides in the mitochondrion inner membrane. The catalysed reaction is a ubiquinone + NADH + 5 H(+)(in) = a ubiquinol + NAD(+) + 4 H(+)(out). In terms of biological role, core subunit of the mitochondrial membrane respiratory chain NADH dehydrogenase (Complex I) which catalyzes electron transfer from NADH through the respiratory chain, using ubiquinone as an electron acceptor. Essential for the catalytic activity and assembly of complex I. The sequence is that of NADH-ubiquinone oxidoreductase chain 1 (MT-ND1) from Zaedyus pichiy (Pichi).